We begin with the raw amino-acid sequence, 620 residues long: MIAFTDIVGMDLAKQALMLLAVDPSLGGVVIPSTVGSGKSTLARAFADILPEGTPFVELPLNVTEDRLIGGVDLEATLASGQRVVQHGVLSKAHKGVLYVDSLSLLDSSAVSHIMDAMSRGAVIVEREGLSEVHPADFMLVGTYDPSDGEVRMGLLDRIGIIVPFTPVNDYRARKQIVSLVMGTRNEEDTQDELRMLRGIIGAAREQLHHVSITNEQIKGLIQTAISLGVEGNRVDIFAIRAAIANAALNQRTEVDDEDLKLAMKLVLVPRATRMPEREPNPEEMAQDEPPPQEEQPQDEAEDQNAPPDEADSDADEEQEETPDMIEELMMDAVETELPDNILNISLASKKKAKSGSRGEALNNKRGRFVRSQPGEIKSGKVALIPTLISAAPWQASRKAEQAKKGIKSTAALIIGKDDIKIKRFRDKSGTLFIFMVDASGSMALNRMRQAKGAVASLLQNAYVHRDQVSLISFRGKQAQVLLPPSQSVDRAKRELDVLPTGGGTPLASALLTGWETAKQARAKGITQIMFVMITDGRGNIPLGAAYDPNATKASKEELEKEVEALALSIQADGIASIVVDTQMNYLSRGEAPKLAQKLGGRYFYLPNAKAEQIVEAALS.

Position 33–40 (33–40 (STVGSGKS)) interacts with ATP. A disordered region spans residues 272-322 (ATRMPEREPNPEEMAQDEPPPQEEQPQDEAEDQNAPPDEADSDADEEQEET). Positions 296 to 322 (QPQDEAEDQNAPPDEADSDADEEQEET) are enriched in acidic residues. One can recognise a VWFA domain in the interval 432-620 (LFIFMVDASG…AEQIVEAALS (189 aa)).

The protein belongs to the Mg-chelatase subunits D/I family.

The catalysed reaction is protoporphyrin IX + Mg(2+) + ATP + H2O = Mg-protoporphyrin IX + ADP + phosphate + 3 H(+). Its pathway is porphyrin-containing compound metabolism; bacteriochlorophyll biosynthesis. Functionally, involved in bacteriochlorophyll biosynthesis; introduces a magnesium ion into protoporphyrin IX to yield Mg-protoporphyrin IX. This is Magnesium-chelatase 67 kDa subunit (bchD) from Chlorobaculum tepidum (strain ATCC 49652 / DSM 12025 / NBRC 103806 / TLS) (Chlorobium tepidum).